Here is a 195-residue protein sequence, read N- to C-terminus: Imidazoleglycerol-phosphate dehydratase (195 aa).

Belongs to the imidazoleglycerol-phosphate dehydratase family.

Its subcellular location is the cytoplasm. The catalysed reaction is D-erythro-1-(imidazol-4-yl)glycerol 3-phosphate = 3-(imidazol-4-yl)-2-oxopropyl phosphate + H2O. It participates in amino-acid biosynthesis; L-histidine biosynthesis; L-histidine from 5-phospho-alpha-D-ribose 1-diphosphate: step 6/9. In Thermotoga neapolitana (strain ATCC 49049 / DSM 4359 / NBRC 107923 / NS-E), this protein is Imidazoleglycerol-phosphate dehydratase.